Here is a 64-residue protein sequence, read N- to C-terminus: Large ribosomal subunit protein bL35 (64 aa).

This sequence belongs to the bacterial ribosomal protein bL35 family.

This chain is Large ribosomal subunit protein bL35, found in Helicobacter hepaticus (strain ATCC 51449 / 3B1).